The sequence spans 240 residues: Peptidyl-tRNA hydrolase (240 aa).

TRNA is bound at residue Tyr14. His19 functions as the Proton acceptor in the catalytic mechanism. TRNA-binding residues include Phe64, Asn66, and Asn112. The disordered stretch occupies residues 196–227; it reads EKPAQKQQPKQQSHIRQARSQQAPAKLPETGP. Positions 209-218 are enriched in polar residues; that stretch reads HIRQARSQQA.

The protein belongs to the PTH family. Monomer.

The protein resides in the cytoplasm. It carries out the reaction an N-acyl-L-alpha-aminoacyl-tRNA + H2O = an N-acyl-L-amino acid + a tRNA + H(+). In terms of biological role, hydrolyzes ribosome-free peptidyl-tRNAs (with 1 or more amino acids incorporated), which drop off the ribosome during protein synthesis, or as a result of ribosome stalling. Its function is as follows. Catalyzes the release of premature peptidyl moieties from peptidyl-tRNA molecules trapped in stalled 50S ribosomal subunits, and thus maintains levels of free tRNAs and 50S ribosomes. The sequence is that of Peptidyl-tRNA hydrolase from Mesorhizobium japonicum (strain LMG 29417 / CECT 9101 / MAFF 303099) (Mesorhizobium loti (strain MAFF 303099)).